We begin with the raw amino-acid sequence, 237 residues long: MVTEQDPTTLMKQQVGKAAAEEVKSGMIVGLGTGSTTAYMIQFLGELLQRGELKDIKGIPTSFQSTVLAKKYGVPLTTLDEVDYMDIAIDGADEVDPQKNLIKGGGAAHTREKIVDCLAEKFVVVVDSSKLVDKLGSTFLLPVEVIPMAMNPVIRAIEKLGGQPEVRMGVKKAGPIVTDQGNLVIDVKFDSIDNPGELEKSLNNIPGVLENGLFVGVADVILVGEIDNGKPIVRTIS.

Residues 33–36 (TGST), 90–93 (DGAD), and 103–106 (KGGG) each bind substrate. Residue glutamate 112 is the Proton acceptor of the active site. Lysine 130 provides a ligand contact to substrate.

This sequence belongs to the ribose 5-phosphate isomerase family. As to quaternary structure, homodimer.

It carries out the reaction aldehydo-D-ribose 5-phosphate = D-ribulose 5-phosphate. The protein operates within carbohydrate degradation; pentose phosphate pathway; D-ribose 5-phosphate from D-ribulose 5-phosphate (non-oxidative stage): step 1/1. Its function is as follows. Catalyzes the reversible conversion of ribose-5-phosphate to ribulose 5-phosphate. This is Ribose-5-phosphate isomerase A from Trichodesmium erythraeum (strain IMS101).